The following is a 536-amino-acid chain: Major facilitator superfamily domain-containing protein 4B (536 aa).

Transmembrane regions (helical) follow at residues leucine 19–isoleucine 39, isoleucine 53–alanine 73, alanine 81–leucine 101, valine 105–isoleucine 125, isoleucine 140–alanine 160, tyrosine 211–methionine 231, phenylalanine 297–valine 317, leucine 341–tyrosine 361, valine 366–leucine 386, valine 391–leucine 411, valine 428–isoleucine 448, and phenylalanine 456–leucine 476.

It belongs to the major facilitator superfamily.

The protein localises to the membrane. The sequence is that of Major facilitator superfamily domain-containing protein 4B from Danio rerio (Zebrafish).